We begin with the raw amino-acid sequence, 170 residues long: Adenine phosphoribosyltransferase (170 aa).

This sequence belongs to the purine/pyrimidine phosphoribosyltransferase family. In terms of assembly, homodimer.

It is found in the cytoplasm. It carries out the reaction AMP + diphosphate = 5-phospho-alpha-D-ribose 1-diphosphate + adenine. It participates in purine metabolism; AMP biosynthesis via salvage pathway; AMP from adenine: step 1/1. Catalyzes a salvage reaction resulting in the formation of AMP, that is energically less costly than de novo synthesis. In Flavobacterium johnsoniae (strain ATCC 17061 / DSM 2064 / JCM 8514 / BCRC 14874 / CCUG 350202 / NBRC 14942 / NCIMB 11054 / UW101) (Cytophaga johnsonae), this protein is Adenine phosphoribosyltransferase.